The chain runs to 399 residues: Inositol polyphosphate 1-phosphatase (399 aa).

D54 contacts Li(+). Mg(2+) is bound at residue E79. Position 80 (E80) interacts with Li(+). Residues D153 and I155 each contribute to the Mg(2+) site. Residues D156, S157, T158, S267, K269, G289, A290, K293, and T311 each contribute to the 1D-myo-inositol 1,4-bisphosphate site. D316 lines the Mg(2+) pocket. S317 carries the post-translational modification Phosphoserine.

It belongs to the inositol monophosphatase superfamily. In terms of assembly, monomer. Mg(2+) serves as cofactor. As to expression, ubiquitously expressed, with highest levels in pancreas and kidney.

The enzyme catalyses 1D-myo-inositol 1,4-bisphosphate + H2O = 1D-myo-inositol 4-phosphate + phosphate. The catalysed reaction is 1D-myo-inositol 1,3,4-trisphosphate + H2O = 1D-myo-inositol 3,4-bisphosphate + phosphate. The protein operates within signal transduction; phosphatidylinositol signaling pathway. Its activity is regulated as follows. Inhibited by Li(+). In terms of biological role, mg(2+)-dependent phosphatase that catalyzes the hydrolysis of the 1-position phosphate from inositol 1,4-bisphosphate and inositol 1,3,4-trisphosphate and participates in inositol phosphate metabolism. In Homo sapiens (Human), this protein is Inositol polyphosphate 1-phosphatase.